The following is a 377-amino-acid chain: tRNA-queuosine alpha-mannosyltransferase (377 aa).

This sequence belongs to the glycosyltransferase group 1 family. Glycosyltransferase 4 subfamily.

It carries out the reaction queuosine(34) in tRNA(Asp) + GDP-alpha-D-mannose = O-4''-alpha-D-mannosylqueuosine(34) in tRNA(Asp) + GDP + H(+). In terms of biological role, glycosyltransferase that specifically catalyzes mannosylation of cytoplasmic tRNA(Asp) modified with queuosine at position 34 (queuosine(34)). Mannosylates the cyclopentene moiety of queuosine(34) in tRNA(Asp) to form mannosyl-queuosine(34). This Drosophila melanogaster (Fruit fly) protein is tRNA-queuosine alpha-mannosyltransferase.